Here is a 443-residue protein sequence, read N- to C-terminus: Probable D-serine dehydratase (443 aa).

Residue lysine 116 is modified to N6-(pyridoxal phosphate)lysine.

This sequence belongs to the serine/threonine dehydratase family. DsdA subfamily. The cofactor is pyridoxal 5'-phosphate.

It carries out the reaction D-serine = pyruvate + NH4(+). This chain is Probable D-serine dehydratase, found in Bacillus cereus (strain B4264).